We begin with the raw amino-acid sequence, 139 residues long: D-ribose pyranase (139 aa).

Histidine 20 (proton donor) is an active-site residue. Substrate-binding positions include aspartate 28, histidine 106, and 128-130; that span reads YAN.

Belongs to the RbsD / FucU family. RbsD subfamily. Homodecamer.

Its subcellular location is the cytoplasm. It catalyses the reaction beta-D-ribopyranose = beta-D-ribofuranose. The protein operates within carbohydrate metabolism; D-ribose degradation; D-ribose 5-phosphate from beta-D-ribopyranose: step 1/2. Functionally, catalyzes the interconversion of beta-pyran and beta-furan forms of D-ribose. The sequence is that of D-ribose pyranase from Serratia proteamaculans (strain 568).